Consider the following 311-residue polypeptide: Formimidoylglutamase (311 aa).

The Mn(2+) site is built by His-130, Asp-155, His-157, Asp-159, Cys-242, and Asp-244.

The protein belongs to the arginase family. Mn(2+) serves as cofactor.

The catalysed reaction is N-formimidoyl-L-glutamate + H2O = formamide + L-glutamate. The protein operates within amino-acid degradation; L-histidine degradation into L-glutamate; L-glutamate from N-formimidoyl-L-glutamate (hydrolase route): step 1/1. Functionally, catalyzes the conversion of N-formimidoyl-L-glutamate to L-glutamate and formamide. This chain is Formimidoylglutamase, found in Staphylococcus aureus (strain MRSA252).